Here is an 87-residue protein sequence, read N- to C-terminus: NADH-ubiquinone oxidoreductase chain 4L (87 aa).

Helical transmembrane passes span 1–21 (MNLS…NRKN), 22–42 (IILM…LVLI), and 57–77 (LYII…LVAF).

This sequence belongs to the complex I subunit 4L family. Core subunit of respiratory chain NADH dehydrogenase (Complex I) which is composed of 45 different subunits.

It is found in the mitochondrion inner membrane. It carries out the reaction a ubiquinone + NADH + 5 H(+)(in) = a ubiquinol + NAD(+) + 4 H(+)(out). Functionally, core subunit of the mitochondrial membrane respiratory chain NADH dehydrogenase (Complex I) which catalyzes electron transfer from NADH through the respiratory chain, using ubiquinone as an electron acceptor. This is NADH-ubiquinone oxidoreductase chain 4L (ND4L) from Moniliophthora perniciosa (strain FA553 / isolate CP02) (Witches'-broom disease fungus).